The primary structure comprises 177 residues: Small ribosomal subunit protein bS16 (177 aa).

Residues 80 to 177 (GIIAMPANGS…AAEAPKEEAK (98 aa)) form a disordered region. Over residues 107 to 122 (AAPAAAPKAEAAPAAE) the composition is skewed to low complexity.

The protein belongs to the bacterial ribosomal protein bS16 family.

The sequence is that of Small ribosomal subunit protein bS16 from Pelagibacter ubique (strain HTCC1062).